Consider the following 347-residue polypeptide: S-adenosylmethionine decarboxylase proenzyme (347 aa).

Active-site residues include glutamate 10 and glutamate 13. Residue serine 66 is the Schiff-base intermediate with substrate; via pyruvic acid of the active site. At serine 66 the chain carries Pyruvic acid (Ser); by autocatalysis. The Proton donor; for catalytic activity role is filled by cysteine 80. Catalysis depends on proton acceptor; for processing activity residues serine 237 and histidine 251.

This sequence belongs to the eukaryotic AdoMetDC family. Pyruvate is required as a cofactor. Is synthesized initially as an inactive proenzyme. Formation of the active enzyme involves a self-maturation process in which the active site pyruvoyl group is generated from an internal serine residue via an autocatalytic post-translational modification. Two non-identical subunits are generated from the proenzyme in this reaction, and the pyruvate is formed at the N-terminus of the alpha chain, which is derived from the carboxyl end of the proenzyme. The post-translation cleavage follows an unusual pathway, termed non-hydrolytic serinolysis, in which the side chain hydroxyl group of the serine supplies its oxygen atom to form the C-terminus of the beta chain, while the remainder of the serine residue undergoes an oxidative deamination to produce ammonia and the pyruvoyl group blocking the N-terminus of the alpha chain.

The catalysed reaction is S-adenosyl-L-methionine + H(+) = S-adenosyl 3-(methylsulfanyl)propylamine + CO2. Its pathway is amine and polyamine biosynthesis; S-adenosylmethioninamine biosynthesis; S-adenosylmethioninamine from S-adenosyl-L-methionine: step 1/1. This is S-adenosylmethionine decarboxylase proenzyme (SamDC) from Drosophila melanogaster (Fruit fly).